The sequence spans 971 residues: uncharacterized protein (971 aa).

13 consecutive transmembrane segments (helical) span residues 11 to 31, 516 to 536, 547 to 567, 569 to 589, 615 to 635, 651 to 671, 727 to 747, 763 to 783, 795 to 815, 817 to 837, 878 to 898, 900 to 920, and 923 to 943; these read WLLK…GIIF, FASS…ALGI, LALA…GGVV, VFSF…LITL, FFTM…VIYL, AITS…LFVS, LLFI…LYLG, STGI…YSLP, IALI…NFIF, IDQS…FFQA, IGSS…FGGI, GTIN…SVFV, and LPLF…YVQI.

The protein resides in the cell membrane. This is an uncharacterized protein from Mycoplasma pneumoniae (strain ATCC 29342 / M129 / Subtype 1) (Mycoplasmoides pneumoniae).